Here is a 434-residue protein sequence, read N- to C-terminus: Putative D-alanyl-D-alanine carboxypeptidase (434 aa).

Residues 7 to 25 (YLSLLAVSCSVSAAKYPVL) form a helical; Signal-anchor membrane-spanning segment.

Belongs to the peptidase S12 family. YfeW subfamily.

It localises to the cell inner membrane. The enzyme catalyses Preferential cleavage: (Ac)2-L-Lys-D-Ala-|-D-Ala. Also transpeptidation of peptidyl-alanyl moieties that are N-acyl substituents of D-alanine.. This Escherichia coli O157:H7 protein is Putative D-alanyl-D-alanine carboxypeptidase.